The chain runs to 267 residues: 3-methyl-2-oxobutanoate hydroxymethyltransferase (267 aa).

Asp46 and Asp85 together coordinate Mg(2+). Residues 46-47 (DS), Asp85, and Lys115 each bind 3-methyl-2-oxobutanoate. Residue Glu117 coordinates Mg(2+). The Proton acceptor role is filled by Glu184.

This sequence belongs to the PanB family. Homodecamer; pentamer of dimers. Requires Mg(2+) as cofactor.

Its subcellular location is the cytoplasm. It carries out the reaction 3-methyl-2-oxobutanoate + (6R)-5,10-methylene-5,6,7,8-tetrahydrofolate + H2O = 2-dehydropantoate + (6S)-5,6,7,8-tetrahydrofolate. The protein operates within cofactor biosynthesis; (R)-pantothenate biosynthesis; (R)-pantoate from 3-methyl-2-oxobutanoate: step 1/2. Functionally, catalyzes the reversible reaction in which hydroxymethyl group from 5,10-methylenetetrahydrofolate is transferred onto alpha-ketoisovalerate to form ketopantoate. This chain is 3-methyl-2-oxobutanoate hydroxymethyltransferase, found in Geobacter sulfurreducens (strain ATCC 51573 / DSM 12127 / PCA).